Reading from the N-terminus, the 225-residue chain is Suppressor of cytokine signaling 3 (225 aa).

The kinase inhibitory region (KIR) stretch occupies residues 22-33 (LKTFSSKSEYQL). The extended SH2 subdomain (ESS) stretch occupies residues 34-45 (VVNAVRKLQESG). The SH2 domain occupies 46 to 142 (FYWSAVTGGE…APSFSLPPTE (97 aa)). The disordered stretch occupies residues 141–160 (TEPSFEVQEQPPAQALPGGT). In terms of domain architecture, SOCS box spans 177–224 (VLSRPLSSNVATLQHLCRKTVNGHLDSYEKVTQLPGPIREFLDQYDAP).

In terms of assembly, interacts with multiple activated proteins of the tyrosine kinase signaling pathway including IGF1 receptor, insulin receptor and JAK2. Binding to JAK2 is mediated through the KIR and SH2 domains to a phosphorylated tyrosine residue within the JAK2 JH1 domain. Binds specific activated tyrosine residues of the leptin, EPO, IL12, GSCF and gp130 receptors. Interaction with CSNK1E stabilize SOCS3 protein. Component of the probable ECS(SOCS3) E3 ubiquitin-protein ligase complex which contains CUL5, RNF7/RBX2, Elongin BC complex and SOCS3. Interacts with CUL5, RNF7, ELOB and ELOC. Interacts with FGFR3. Interacts with INSR. Interacts with BCL10; this interaction may interfere with BCL10-binding with PELI2. Interacts with NOD2 (via CARD domain); the interaction promotes NOD2 degradation. Phosphorylated on tyrosine residues after stimulation by the cytokines, IL-2, EPO or IGF1.

The protein operates within protein modification; protein ubiquitination. Its function is as follows. SOCS family proteins form part of a classical negative feedback system that regulates cytokine signal transduction. SOCS3 is involved in negative regulation of cytokines that signal through the JAK/STAT pathway. Inhibits cytokine signal transduction by binding to tyrosine kinase receptors including IL6ST/gp130, LIF, erythropoietin, insulin, IL12, GCSF and leptin receptors. Binding to JAK2 inhibits its kinase activity and regulates IL6 signaling. Suppresses fetal liver erythropoiesis. Regulates onset and maintenance of allergic responses mediated by T-helper type 2 cells. Probable substrate recognition component of a SCF-like ECS (Elongin BC-CUL2/5-SOCS-box protein) E3 ubiquitin-protein ligase complex which mediates the ubiquitination and subsequent proteasomal degradation of target proteins. The chain is Suppressor of cytokine signaling 3 from Rattus norvegicus (Rat).